A 723-amino-acid polypeptide reads, in one-letter code: Host cell factor 2 (723 aa).

4 Kelch repeats span residues 34 to 79 (LMII…GFVC), 83 to 130 (RILV…RLGH), 207 to 255 (KMYV…VIGN), and 257 to 305 (MYIF…DSQE). Fibronectin type-III domains lie at 357–436 (PPAP…ANCT), 516–606 (TPSN…TCIP), and 608–720 (FPGA…SKKA). Positions 398–472 (AASPDASAAP…VALHSPLAPN (75 aa)) are disordered. The span at 419–433 (QGSNSILHNSVSDPA) shows a compositional bias: polar residues.

As to quaternary structure, binds KMT2A/MLL1. Component of the MLL1/MLL complex, at least composed of KMT2A/MLL1, ASH2L, RBBP5, DPY30, WDR5, MEN1, HCFC1 and HCFC2. Interacts with TASOR.

Its subcellular location is the cytoplasm. The protein resides in the nucleus. The sequence is that of Host cell factor 2 (Hcfc2) from Rattus norvegicus (Rat).